A 370-amino-acid chain; its full sequence is 5-hydroxytryptamine receptor 5B (370 aa).

Residues 1–36 (MEVSNLSGATPGIAFPPGPESCSDSPSSGRSMGSTP) are disordered. At 1–48 (MEVSNLSGATPGIAFPPGPESCSDSPSSGRSMGSTPGGLILSGREPPF) the chain is on the extracellular side. An N-linked (GlcNAc...) asparagine glycan is attached at Asn-5. Over residues 20-36 (ESCSDSPSSGRSMGSTP) the composition is skewed to low complexity. The chain crosses the membrane as a helical span at residues 49–75 (SAFTVLVVTLLVLLIAATFLWNLLVLV). At 76-88 (TILRVRAFHRVPH) the chain is on the cytoplasmic side. The chain crosses the membrane as a helical span at residues 89-115 (NLVASTAVSDVLVAALVMPLSLVSELS). The Extracellular segment spans residues 116 to 127 (AGRRWQLGRSLC). A disulfide bridge connects residues Cys-127 and Cys-205. Residues 128–150 (HVWISFDVLCCTASIWNVAAIAL) traverse the membrane as a helical segment. Position 134 (Asp-134) interacts with serotonin. At 151–168 (DRYWTITRHLQYTLRTRR) the chain is on the cytoplasmic side. A helical membrane pass occupies residues 169–189 (RASALMIAITWALSALIALAP). Residues 190–211 (LLFGWGEAYDARLQRCQVSQEP) lie on the Extracellular side of the membrane. A helical membrane pass occupies residues 212 to 233 (SYAVFSTCGAFYVPLAVVLFVY). Over 234-300 (WKIYKAAKFR…QKEKRAAMMV (67 aa)) the chain is Cytoplasmic. A helical transmembrane segment spans residues 301-325 (GILIGVFVLCWIPFFLTELVSPLCA). Topologically, residues 326–327 (CS) are extracellular. The chain crosses the membrane as a helical span at residues 328–352 (LPPIWKSIFLWLGYSNSFFNPLIYT). Residues 353-370 (AFNKNYNNAFKSLFTKQR) are Cytoplasmic-facing.

This sequence belongs to the G-protein coupled receptor 1 family. In terms of tissue distribution, brain; in the CA1 region of hippocampus, the medial habenula, and raphe nuclei.

It localises to the cell membrane. Functionally, G-protein coupled receptor for 5-hydroxytryptamine (serotonin), a biogenic hormone that functions as a neurotransmitter, a hormone and a mitogen. Also functions as a receptor for ergot alkaloid derivatives and other psychoactive substances. Ligand binding causes a conformation change that triggers signaling via guanine nucleotide-binding proteins (G proteins) and modulates the activity of downstream effectors. Htr5b is coupled to G(i)/G(o) G alpha proteins and mediates inhibitory neurotransmission: signaling inhibits adenylate cyclase activity and activates a phosphatidylinositol-calcium second messenger system that regulates the release of Ca(2+) ions from intracellular stores. This Rattus norvegicus (Rat) protein is 5-hydroxytryptamine receptor 5B.